Here is a 205-residue protein sequence, read N- to C-terminus: Imidazole glycerol phosphate synthase subunit HisH (205 aa).

Residues 1–205 form the Glutamine amidotransferase type-1 domain; that stretch reads MIALVDYGGG…FFKMALGDKK (205 aa). Residue cysteine 79 is the Nucleophile of the active site. Active-site residues include histidine 181 and glutamate 183.

As to quaternary structure, heterodimer of HisH and HisF.

Its subcellular location is the cytoplasm. It carries out the reaction 5-[(5-phospho-1-deoxy-D-ribulos-1-ylimino)methylamino]-1-(5-phospho-beta-D-ribosyl)imidazole-4-carboxamide + L-glutamine = D-erythro-1-(imidazol-4-yl)glycerol 3-phosphate + 5-amino-1-(5-phospho-beta-D-ribosyl)imidazole-4-carboxamide + L-glutamate + H(+). It catalyses the reaction L-glutamine + H2O = L-glutamate + NH4(+). It participates in amino-acid biosynthesis; L-histidine biosynthesis; L-histidine from 5-phospho-alpha-D-ribose 1-diphosphate: step 5/9. In terms of biological role, IGPS catalyzes the conversion of PRFAR and glutamine to IGP, AICAR and glutamate. The HisH subunit catalyzes the hydrolysis of glutamine to glutamate and ammonia as part of the synthesis of IGP and AICAR. The resulting ammonia molecule is channeled to the active site of HisF. In Dehalococcoides mccartyi (strain CBDB1), this protein is Imidazole glycerol phosphate synthase subunit HisH.